The chain runs to 104 residues: Urease subunit beta (104 aa).

It belongs to the urease beta subunit family. As to quaternary structure, heterotrimer of UreA (gamma), UreB (beta) and UreC (alpha) subunits. Three heterotrimers associate to form the active enzyme.

It localises to the cytoplasm. It carries out the reaction urea + 2 H2O + H(+) = hydrogencarbonate + 2 NH4(+). It functions in the pathway nitrogen metabolism; urea degradation; CO(2) and NH(3) from urea (urease route): step 1/1. The protein is Urease subunit beta of Rhodopseudomonas palustris (strain BisB18).